The primary structure comprises 897 residues: Protein translocase subunit SecA (897 aa).

Residues Gln89, 107–111, and Asp517 contribute to the ATP site; that span reads GEGKT. Positions 839–856 are enriched in polar residues; it reads DDAQATHSNPNEQTKQAS. Positions 839–897 are disordered; it reads DDAQATHSNPNEQTKQASITNNIQTQTDQQNTYQRKEKKVGRNEPCPCGSGKKYKKCHG. Over residues 857-870 the composition is skewed to low complexity; that stretch reads ITNNIQTQTDQQNT. The Zn(2+) site is built by Cys884, Cys886, Cys895, and His896.

This sequence belongs to the SecA family. In terms of assembly, monomer and homodimer. Part of the essential Sec protein translocation apparatus which comprises SecA, SecYEG and auxiliary proteins SecDF-YajC and YidC. It depends on Zn(2+) as a cofactor.

It is found in the cell inner membrane. The protein resides in the cytoplasm. The enzyme catalyses ATP + H2O + cellular proteinSide 1 = ADP + phosphate + cellular proteinSide 2.. In terms of biological role, part of the Sec protein translocase complex. Interacts with the SecYEG preprotein conducting channel. Has a central role in coupling the hydrolysis of ATP to the transfer of proteins into and across the cell membrane, serving as an ATP-driven molecular motor driving the stepwise translocation of polypeptide chains across the membrane. The chain is Protein translocase subunit SecA from Vesicomyosocius okutanii subsp. Calyptogena okutanii (strain HA).